The sequence spans 263 residues: PDZ domain-containing protein 9 (263 aa).

Residues 30 to 109 (QTKLTVGSMG…GTILQIKVYR (80 aa)) enclose the PDZ domain.

This chain is PDZ domain-containing protein 9 (PDZD9), found in Bos taurus (Bovine).